Reading from the N-terminus, the 141-residue chain is Protein NrdI (141 aa).

The protein belongs to the NrdI family.

Probably involved in ribonucleotide reductase function. The polypeptide is Protein NrdI (Wigglesworthia glossinidia brevipalpis).